The chain runs to 389 residues: MTATALEIAQALLRCPSVTPADAGALGVLEALLQDAGFATHRVTFSEPGTADIDNLYARIGDGAPHLCFAGHTDVVPPGEETAWSHGAFAGDVEGGLLYGRGAVDMKGGIACAVAATLDYLAANGGQPQQSGKGSISFLITGDEEDVAVNGTVKLLQWAAERGERFDHCIVGEPSNVEAIGDTIKIGRRGSQSGVLIVDGRQGHVAYPHRASNPIPDIATLITALNDEPLDQGSAQFQPSNLEFTSVDVGNPATNVIPAQARAKFNIRFNDHHTQETLRALVEQRLAAACGNRIRARIEWLPSNADVFVTKPGGFTDLVSAAIADITGRSPDLNTGGGTSDARFIAKYCPVVEFGLVGQTMHQIDERTPVSDLDKLTAIYRGVLERYFR.

Histidine 72 lines the Zn(2+) pocket. Aspartate 74 is an active-site residue. Residue aspartate 105 coordinates Zn(2+). Catalysis depends on glutamate 144, which acts as the Proton acceptor. Residues glutamate 145, glutamate 173, and histidine 362 each coordinate Zn(2+).

Belongs to the peptidase M20A family. DapE subfamily. Homodimer. The cofactor is Zn(2+). It depends on Co(2+) as a cofactor.

It catalyses the reaction N-succinyl-(2S,6S)-2,6-diaminopimelate + H2O = (2S,6S)-2,6-diaminopimelate + succinate. It participates in amino-acid biosynthesis; L-lysine biosynthesis via DAP pathway; LL-2,6-diaminopimelate from (S)-tetrahydrodipicolinate (succinylase route): step 3/3. In terms of biological role, catalyzes the hydrolysis of N-succinyl-L,L-diaminopimelic acid (SDAP), forming succinate and LL-2,6-diaminopimelate (DAP), an intermediate involved in the bacterial biosynthesis of lysine and meso-diaminopimelic acid, an essential component of bacterial cell walls. The polypeptide is Succinyl-diaminopimelate desuccinylase (Rhodopseudomonas palustris (strain HaA2)).